The primary structure comprises 264 residues: Caffeoyl-CoA O-methyltransferase 2 (264 aa).

Low complexity predominate over residues 1–20 (MATTATEATKTTAPAQEQQA). The interval 1–37 (MATTATEATKTTAPAQEQQANGNGNGEQKTRHSEVGH) is disordered. Residues 28–37 (QKTRHSEVGH) show a composition bias toward basic and acidic residues. K38 contributes to the substrate binding site. S-adenosyl-L-methionine-binding positions include T80, E102, 104–105 (GV), S110, D128, and A157. A substrate-binding site is contributed by D180. Residue D180 coordinates a divalent metal cation. D182 contributes to the S-adenosyl-L-methionine binding site. A divalent metal cation is bound by residues D206 and N207. N211 serves as a coordination point for substrate.

This sequence belongs to the class I-like SAM-binding methyltransferase superfamily. Cation-dependent O-methyltransferase family. CCoAMT subfamily. A divalent metal cation is required as a cofactor.

The enzyme catalyses (E)-caffeoyl-CoA + S-adenosyl-L-methionine = (E)-feruloyl-CoA + S-adenosyl-L-homocysteine + H(+). The protein operates within aromatic compound metabolism; phenylpropanoid biosynthesis. Its function is as follows. Methylates caffeoyl-CoA to feruloyl-CoA and 5-hydroxyferuloyl-CoA to sinapoyl-CoA. Plays a role in the synthesis of feruloylated polysaccharides. Involved in the reinforcement of the plant cell wall. Also involved in the responding to wounding or pathogen challenge by the increased formation of cell wall-bound ferulic acid polymers. The sequence is that of Caffeoyl-CoA O-methyltransferase 2 (CCOAOMT2) from Zea mays (Maize).